The primary structure comprises 408 residues: GTPase Obg (408 aa).

Positions 1–159 (MKFVDEVSIR…RDLKMEMKVL (159 aa)) constitute an Obg domain. Positions 127 to 150 (NTRFKSSTNRAPRQTTPGKPGDQR) are disordered. Over residues 129-143 (RFKSSTNRAPRQTTP) the composition is skewed to polar residues. In terms of domain architecture, OBG-type G spans 160-333 (ADVGLLGLPN…LSHDLMRYLE (174 aa)). GTP is bound by residues 166-173 (GLPNAGKS), 191-195 (FTTLV), 213-216 (DIPG), 283-286 (NKSD), and 314-316 (SAI). Mg(2+)-binding residues include S173 and T193. A disordered region spans residues 382-408 (HDIGDDDGWDDDFEDDEDGPEIIYVRD). Residues 385–401 (GDDDGWDDDFEDDEDGP) show a composition bias toward acidic residues.

It belongs to the TRAFAC class OBG-HflX-like GTPase superfamily. OBG GTPase family. As to quaternary structure, monomer. The cofactor is Mg(2+).

The protein localises to the cytoplasm. Its function is as follows. An essential GTPase which binds GTP, GDP and possibly (p)ppGpp with moderate affinity, with high nucleotide exchange rates and a fairly low GTP hydrolysis rate. Plays a role in control of the cell cycle, stress response, ribosome biogenesis and in those bacteria that undergo differentiation, in morphogenesis control. The polypeptide is GTPase Obg (Pseudomonas putida (strain GB-1)).